The primary structure comprises 451 residues: Magnesium transporter MgtE (451 aa).

At 1 to 285 (MVQNMTYDEL…TKAYVAAYRR (285 aa)) the chain is on the cytoplasmic side. Residues Asp-64 and Asp-96 each coordinate Mg(2+). CBS domains are found at residues 140–203 (MTNR…VQDL) and 204–260 (MFTR…EADE). Mg(2+)-binding residues include Glu-218, Asp-228, Asp-249, Asp-252, Glu-257, Glu-260, and Asp-261. A helical transmembrane segment spans residues 286-306 (LPWLILLLFIGLISGSIISYF). Residues 307–311 (EDALK) lie on the Extracellular side of the membrane. Residues 312-332 (QVVALAFFMPMVSGMTGNTGT) traverse the membrane as a helical segment. Topologically, residues 333–371 (QSLAVVIRGLSKEEMNKKTIVRLIFREFRTSIFIGAVCS) are cytoplasmic. The next 2 helical transmembrane spans lie at 372 to 392 (VLIAIVSIIWQGNALLGFVVA) and 393 to 413 (SSLFLTLIIGTMSGTIIPIIL). Over 414-427 (HKLKVDPAIASGPL) the chain is Cytoplasmic. Residues Asp-419 and Asp-433 each contribute to the Mg(2+) site. Residues 428–448 (ITTLNDILSLLIYFGIATAFI) traverse the membrane as a helical segment. Residues 449–451 (HSL) are Extracellular-facing.

It belongs to the SLC41A transporter family. As to quaternary structure, homodimer.

Its subcellular location is the cell membrane. It catalyses the reaction Mg(2+)(in) = Mg(2+)(out). Binds cyclic di-AMP (c-di-AMP), which may regulate the transporter activity. Its function is as follows. Acts as a magnesium transporter. MgtE is the dominant transporter under rich-medium growth conditions, and it may provide the primary route of magnesium import in B.subtilis, while the other putative transport proteins are likely to be utilized for more-specialized growth conditions. This chain is Magnesium transporter MgtE, found in Bacillus subtilis (strain 168).